The chain runs to 144 residues: Catabolic 3-dehydroquinase (144 aa).

The active-site Proton acceptor is Tyr-24. Substrate contacts are provided by Asn-76, His-82, and Asp-89. The active-site Proton donor is the His-102. Substrate contacts are provided by residues 103–104 and Arg-113; that span reads IT.

Belongs to the type-II 3-dehydroquinase family. In terms of assembly, homododecamer. Adopts a ring-like structure, composed of an arrangement of two hexameric rings stacked on top of one another.

The enzyme catalyses 3-dehydroquinate = 3-dehydroshikimate + H2O. Its pathway is aromatic compound metabolism; 3,4-dihydroxybenzoate biosynthesis; 3,4-dihydroxybenzoate from 3-dehydroquinate: step 1/2. In terms of biological role, is involved in the catabolism of quinate. Allows the utilization of quinate as carbon source via the beta-ketoadipate pathway. The protein is Catabolic 3-dehydroquinase of Debaryomyces hansenii (strain ATCC 36239 / CBS 767 / BCRC 21394 / JCM 1990 / NBRC 0083 / IGC 2968) (Yeast).